The sequence spans 613 residues: MAFLSIPSPRRWAALLSLSLGPILGAADATSNSAADYYVRDLPGLPKDGPNIKMHAGHIEVTPESHGNLFFWHFENQHIADKQRTVIWINGGPGCSSEDGAMMEIGPYRLKDKENLYYNNGSWGEFANLLFVDNPVGTGYSLVDTNAYVKELDEMADQFIQFLEKWFALFPQYDRDDIYIAGESYAGQHIPYIAKAILDRNKKNPSKAWNLQGLLIGNGWISPVDQYPAYISFAHEKGIIEKGSDNDKKLQSALRGCERVIASSPGRVDYGECEEILKNILELTRDGNKCINMYDVRLTDTYPSCGMNWPPDLEYLTPYLGRKDVVDALHVTSMKSTGWKECSGAVGGAFTARNSKPAVELLPDLLKEVPVLLFSGAEDFICNHLGTEELISKLEWNGGKGFEVTPGNWAPRRDWTFEGETAGFWQEARNLTYVLIYNSSHMVPFDLPRRSRDMLDRFMGVDISNIGGDPTDSRIDGEKGPETTVGGASNKTQSAAQDHQKQLDEAKWAAYQKSGEVVLVIVIIAAIAWGYFVWRERRKGAAYHALANHDNNSHSNGFRAKSQPGDLESAAFDESELDDLHGSTPATATSARFPVNRNDTREKFVTKYAEPSS.

A signal peptide spans 1 to 27 (MAFLSIPSPRRWAALLSLSLGPILGAA). Topologically, residues 28–513 (DATSNSAADY…DEAKWAAYQK (486 aa)) are lumenal. The N-linked (GlcNAc...) asparagine glycan is linked to asparagine 120. Residues serine 184 and aspartate 379 contribute to the active site. N-linked (GlcNAc...) asparagine glycans are attached at residues asparagine 430 and asparagine 438. Residue histidine 441 is part of the active site. The interval 466 to 499 (IGGDPTDSRIDGEKGPETTVGGASNKTQSAAQDH) is disordered. Basic and acidic residues predominate over residues 471–481 (TDSRIDGEKGP). A compositionally biased stretch (polar residues) spans 486 to 497 (GGASNKTQSAAQ). Residue asparagine 490 is glycosylated (N-linked (GlcNAc...) asparagine). A helical membrane pass occupies residues 514–534 (SGEVVLVIVIIAAIAWGYFVW). The Cytoplasmic segment spans residues 535–613 (RERRKGAAYH…FVTKYAEPSS (79 aa)). A disordered region spans residues 569-597 (SAAFDESELDDLHGSTPATATSARFPVNR).

It belongs to the peptidase S10 family.

The protein resides in the golgi apparatus. It localises to the trans-Golgi network membrane. It carries out the reaction Preferential release of a C-terminal arginine or lysine residue.. Functionally, protease with a carboxypeptidase B-like function involved in the C-terminal processing of the lysine and arginine residues from protein precursors. Promotes cell fusion and is involved in the programmed cell death. In Fusarium vanettenii (strain ATCC MYA-4622 / CBS 123669 / FGSC 9596 / NRRL 45880 / 77-13-4) (Fusarium solani subsp. pisi), this protein is Pheromone-processing carboxypeptidase KEX1 (KEX1).